Reading from the N-terminus, the 418-residue chain is Queuine tRNA-ribosyltransferase accessory subunit 2 (418 aa).

Zn(2+)-binding residues include Cys325, Cys327, Cys330, and His356.

This sequence belongs to the queuine tRNA-ribosyltransferase family. QTRT2 subfamily. As to quaternary structure, heterodimer of a catalytic subunit and an accessory subunit. It depends on Zn(2+) as a cofactor.

It localises to the cytoplasm. Non-catalytic subunit of the queuine tRNA-ribosyltransferase (TGT) that catalyzes the base-exchange of a guanine (G) residue with queuine (Q) at position 34 (anticodon wobble position) in tRNAs with GU(N) anticodons (tRNA-Asp, -Asn, -His and -Tyr), resulting in the hypermodified nucleoside queuosine (7-(((4,5-cis-dihydroxy-2-cyclopenten-1-yl)amino)methyl)-7-deazaguanosine). The sequence is that of Queuine tRNA-ribosyltransferase accessory subunit 2 from Drosophila melanogaster (Fruit fly).